The chain runs to 225 residues: Glutathione S-transferase-like protein tpcF (225 aa).

The region spanning 4 to 85 (IQPITVYGKG…YLVSHYDPDH (82 aa)) is the GST N-terminal domain. The region spanning 92–225 (GSNLAALATQ…KGMADIFPST (134 aa)) is the GST C-terminal domain.

The protein belongs to the GST superfamily. Specifically expressed in conidia.

Its pathway is secondary metabolite biosynthesis. Glutathione S-transferase-like protein; part of the gene cluster that mediates the biosynthesis of trypacidin, a mycotoxin with antiprotozoal activity and that plays a role in the infection process. The pathway begins with the synthesis of atrochrysone thioester by the polyketide synthase (PKS) tpcC. The atrochrysone carboxyl ACP thioesterase tpcB then breaks the thioester bond and releases the atrochrysone carboxylic acid from tpcC. The decarboxylase tpcK converts atrochrysone carboxylic acid to atrochrysone which is further reduced into emodin anthrone. The next step is performed by the emodin anthrone oxygenase tpcL that catalyzes the oxidation of emodinanthrone to emodin. Emodin O-methyltransferase encoded by tpcA catalyzes methylation of the 8-hydroxy group of emodin to form questin. Ring cleavage of questin by questin oxidase tpcI leads to desmethylsulochrin via several intermediates including questin epoxide. Another methylation step catalyzed by tpcM leads to the formation of sulochrin which is further converted to monomethylsulfochrin by tpcH. Finally, the tpcJ catalyzes the conversion of monomethylsulfochrin to trypacidin. Trypacidin is toxic for human pulmonary and bronchial epithelial cells by initiating the intracellular formation of nitric oxide (NO) and hydrogen peroxide (H(2)O(2)), thus triggering host necrotic cell death. The trypacidin pathway is also able to produce endocrocin via a distinct route from the endocrocin Enc pathway. The sequence is that of Glutathione S-transferase-like protein tpcF from Aspergillus fumigatus (strain ATCC MYA-4609 / CBS 101355 / FGSC A1100 / Af293) (Neosartorya fumigata).